Consider the following 344-residue polypeptide: UDP-3-O-acylglucosamine N-acyltransferase (344 aa).

Catalysis depends on His250, which acts as the Proton acceptor.

This sequence belongs to the transferase hexapeptide repeat family. LpxD subfamily. As to quaternary structure, homotrimer.

It carries out the reaction a UDP-3-O-[(3R)-3-hydroxyacyl]-alpha-D-glucosamine + a (3R)-hydroxyacyl-[ACP] = a UDP-2-N,3-O-bis[(3R)-3-hydroxyacyl]-alpha-D-glucosamine + holo-[ACP] + H(+). The protein operates within bacterial outer membrane biogenesis; LPS lipid A biosynthesis. Catalyzes the N-acylation of UDP-3-O-acylglucosamine using 3-hydroxyacyl-ACP as the acyl donor. Is involved in the biosynthesis of lipid A, a phosphorylated glycolipid that anchors the lipopolysaccharide to the outer membrane of the cell. This Maricaulis maris (strain MCS10) (Caulobacter maris) protein is UDP-3-O-acylglucosamine N-acyltransferase.